The primary structure comprises 350 residues: Erythronate-4-phosphate dehydrogenase (350 aa).

S45 and T66 together coordinate substrate. Residues 124–125 (QV), D144, 203–205 (ASR), and D226 each bind NAD(+). R205 is a catalytic residue. E231 is a catalytic residue. H248 acts as the Proton donor in catalysis. Position 251 (G251) interacts with NAD(+).

It belongs to the D-isomer specific 2-hydroxyacid dehydrogenase family. PdxB subfamily. In terms of assembly, homodimer.

The protein localises to the cytoplasm. The catalysed reaction is 4-phospho-D-erythronate + NAD(+) = (R)-3-hydroxy-2-oxo-4-phosphooxybutanoate + NADH + H(+). It functions in the pathway cofactor biosynthesis; pyridoxine 5'-phosphate biosynthesis; pyridoxine 5'-phosphate from D-erythrose 4-phosphate: step 2/5. Its function is as follows. Catalyzes the oxidation of erythronate-4-phosphate to 3-hydroxy-2-oxo-4-phosphonooxybutanoate. The protein is Erythronate-4-phosphate dehydrogenase of Legionella pneumophila (strain Lens).